The primary structure comprises 124 residues: MSKTIGITGFFLSIVVQSFSANDSLSHKIATGLLFVSIAIYNFDHAKDYSKASLVVICLTFFVLALGIHKLLSFSSDLFDNVNINFGVIFILQITLIIGSVAIAISIMKFICDRLKKKPNGKEC.

Transmembrane regions (helical) follow at residues 54–74 (LVVI…LLSF) and 88–108 (VIFI…ISIM).

It is found in the cell membrane. The chain is SPbeta prophage-derived uncharacterized protein YoqO (yoqO) from Bacillus subtilis (strain 168).